A 468-amino-acid polypeptide reads, in one-letter code: UDP-N-acetylmuramoyl-L-alanine--L-glutamate ligase (468 aa).

122–128 contributes to the ATP binding site; it reads GTKGKST.

The protein belongs to the MurCDEF family. MurD2 subfamily.

Its subcellular location is the cytoplasm. The catalysed reaction is UDP-N-acetyl-alpha-D-muramoyl-L-alanine + L-glutamate + ATP = UDP-N-acetyl-alpha-D-muramoyl-L-alanyl-L-glutamate + ADP + phosphate + H(+). It functions in the pathway cell wall biogenesis; peptidoglycan biosynthesis. In terms of biological role, cell wall formation. Catalyzes the addition of L-glutamate to the nucleotide precursor UDP-N-acetylmuramoyl-L-alanine. Has weak activity with D-glutamate. This is UDP-N-acetylmuramoyl-L-alanine--L-glutamate ligase from Xanthomonas oryzae pv. oryzae (strain MAFF 311018).